A 118-amino-acid chain; its full sequence is Large ribosomal subunit protein bL20 (118 aa).

The protein belongs to the bacterial ribosomal protein bL20 family.

In terms of biological role, binds directly to 23S ribosomal RNA and is necessary for the in vitro assembly process of the 50S ribosomal subunit. It is not involved in the protein synthesizing functions of that subunit. The polypeptide is Large ribosomal subunit protein bL20 (Shewanella baltica (strain OS223)).